Reading from the N-terminus, the 270-residue chain is Phosphatidylglycerol--prolipoprotein diacylglyceryl transferase (270 aa).

The next 4 membrane-spanning stretches (helical) occupy residues phenylalanine 19–alanine 39, leucine 56–glutamate 76, glutamine 92–alanine 112, and glycine 116–isoleucine 136. Arginine 138 is an a 1,2-diacyl-sn-glycero-3-phospho-(1'-sn-glycerol) binding site. Helical transmembrane passes span histidine 178 to leucine 198, glycine 206 to leucine 226, and leucine 236 to valine 256.

Belongs to the Lgt family.

The protein localises to the cell membrane. The catalysed reaction is L-cysteinyl-[prolipoprotein] + a 1,2-diacyl-sn-glycero-3-phospho-(1'-sn-glycerol) = an S-1,2-diacyl-sn-glyceryl-L-cysteinyl-[prolipoprotein] + sn-glycerol 1-phosphate + H(+). It functions in the pathway protein modification; lipoprotein biosynthesis (diacylglyceryl transfer). Catalyzes the transfer of the diacylglyceryl group from phosphatidylglycerol to the sulfhydryl group of the N-terminal cysteine of a prolipoprotein, the first step in the formation of mature lipoproteins. The sequence is that of Phosphatidylglycerol--prolipoprotein diacylglyceryl transferase from Bacillus thuringiensis subsp. konkukian (strain 97-27).